The primary structure comprises 234 residues: Thioredoxin-dependent peroxide reductase, mitochondrial (234 aa).

A mitochondrion-targeting transit peptide spans 1–30 (MSFVARSLIRNVPLMGKAILSQQKQIAARL). The region spanning 40-198 (VRVQQPAPDF…VLRLIKAFQF (159 aa)) is the Thioredoxin domain. Cysteine 85 (cysteine sulfenic acid (-SOH) intermediate) is an active-site residue.

Belongs to the peroxiredoxin family. AhpC/Prx1 subfamily. As to quaternary structure, homodimer; disulfide-linked, upon oxidation. 6 homodimers assemble to form a ring-like dodecamer. Also exists as a monomer, however the monomeric form is present at a much lower level than the homodimeric form. In terms of tissue distribution, expressed in thoracic flight muscles (at protein level). Detected in the head and body (at protein level).

It localises to the mitochondrion. It carries out the reaction a hydroperoxide + [thioredoxin]-dithiol = an alcohol + [thioredoxin]-disulfide + H2O. Functionally, thiol-specific peroxidase that catalyzes the reduction of hydrogen peroxide and organic hydroperoxides to water and alcohols, respectively. Plays a role in cell protection against oxidative stress by detoxifying peroxides. May be involved in aging-associated changes in the responsiveness to oxidative stress. Involved in the maintenance of global thiol redox homeostasis. Functions in the central nervous system (CNS) and in motor neurons and is essential for normal motor function. This Drosophila melanogaster (Fruit fly) protein is Thioredoxin-dependent peroxide reductase, mitochondrial.